Here is a 333-residue protein sequence, read N- to C-terminus: (2R)-3-sulfolactate dehydrogenase (NADP(+)) (333 aa).

It belongs to the LDH2/MDH2 oxidoreductase family.

The enzyme catalyses (2R)-3-sulfolactate + NADP(+) = 3-sulfopyruvate + NADPH + H(+). Its function is as follows. Catalyzes the reduction of sulfopyruvate to (R)-sulfolactate. Together with SlcC, provides a racemase system that converts (2S)-3-sulfolactate to (2R)-3-sulfolactate, which is degraded further by (2R)-sulfolactate sulfo-lyase. The polypeptide is (2R)-3-sulfolactate dehydrogenase (NADP(+)) (comC) (Chromohalobacter salexigens (strain ATCC BAA-138 / DSM 3043 / CIP 106854 / NCIMB 13768 / 1H11)).